A 313-amino-acid polypeptide reads, in one-letter code: MVSPVVYLVVAALLVGLILFLTRGRGRAAAAAQEPLHNEEVPAAAGRVARPQPLEPEEQRAAGRPRRRRDLGSRLQAQRRAQRVAWADENEEEAIIQAQEEEDIEKPVETHLSGKIGAKKLRKLEEKQARKAQREAEEAEREERKRLESQREAEWKKEEERLRLEEEQKEEEERKAQEEQAQREHEEYLKLKETFVVVEEGVGETMTEEQSHSFLAEFINYIKQSKVVLLEDLASQVGLRTQDTINRIQDLLAEGTLTGVIDDRGKFIYITPEELAAVANFIRQRGRVSITELAQASNSLIAWGRETPAQAPA.

Residues 1–28 (MVSPVVYLVVAALLVGLILFLTRGRGRA) form a helical membrane-spanning segment. A mediates interaction with CDK5RAP3 region spans residues 1–113 (MVSPVVYLVV…IEKPVETHLS (113 aa)). The Cytoplasmic segment spans residues 29 to 313 (AAAAQEPLHN…GRETPAQAPA (285 aa)). Residues 40-88 (EVPAAAGRVARPQPLEPEEQRAAGRPRRRRDLGSRLQAQRRAQRVAWAD) form a disordered region. 2 positions are modified to phosphoserine: S73 and S113. A compositionally biased stretch (low complexity) spans 73–87 (SRLQAQRRAQRVAWA). A mediates interaction with TRIP4 region spans residues 117–215 (GAKKLRKLEE…MTEEQSHSFL (99 aa)). A disordered region spans residues 130–185 (RKAQREAEEAEREERKRLESQREAEWKKEEERLRLEEEQKEEEERKAQEEQAQREH). Residues 194-208 (TFVVVEEGVGETMTE) carry the UFM1-interacting motif (UFIM) motif. The mediates interaction with UFL1 stretch occupies residues 215–313 (LAEFINYIKQ…GRETPAQAPA (99 aa)). In terms of domain architecture, PCI spans 228–272 (VLLEDLASQVGLRTQDTINRIQDLLAEGTLTGVIDDRGKFIYITP). K266 participates in a covalent cross-link: Glycyl lysine isopeptide (Lys-Gly) (interchain with G-Cter in UFM1).

The protein belongs to the DDRGK1 family. In terms of assembly, component of the UFM1 ribosome E3 ligase (UREL) complex, composed of UFL1, DDRGK1 and CDK5RAP3. Interacts with (unphosphorylated) ERN1/IRE1-alpha; interaction is dependent on UFM1 and takes place in response to endoplasmic reticulum stress, regulating ERN1/IRE1-alpha stability. Interacts with NFKBIA. Interacts with SOX9. In terms of processing, ubiquitinated. Ubiquitination probably triggers proteasomal degradation and is negatively regulated by UFL1, the enzyme involved in the ufmylation of DDRGK1. Ufmylated; conjugated to ubiquitin-like protein UFM1, probably at Lys-266 by UFL1. The relevance of ufmylation is however unclear: as DDRGK1 acts as a substrate adapter for ufmylation, it is uncertain whether ufmylation is a collateral effect of the ufmylation process or whether it is required to regulate its activity.

Its subcellular location is the endoplasmic reticulum membrane. Functionally, component of the UFM1 ribosome E3 ligase (UREL) complex, a multiprotein complex that catalyzes ufmylation of endoplasmic reticulum-docked proteins. The UREL complex plays a key role in ribosome recycling by mediating mono-ufmylation of the RPL26/uL24 subunit of the 60S ribosome following ribosome dissociation: ufmylation weakens the junction between post-termination 60S subunits and SEC61 translocons, promoting release and recycling of the large ribosomal subunit from the endoplasmic reticulum membrane. Ufmylation of RPL26/uL24 and subsequent 60S ribosome recycling either take place after normal termination of translation or after ribosome stalling during cotranslational translocation at the endoplasmic reticulum. Within the UREL complex, DDRGK1 tethers the complex to the endoplasmic reticulum membrane to restrict its activity to endoplasmic reticulum-docked ribosomes and acts as an ufmylation 'reader': following RPL26/uL24 ufmylation, DDRGK1 specifically binds to ufmylated RPL26/uL24 via its UFIM motif, resulting in stable association between the 60S ribosome and the UREL complex, followed by dissociation of the 60S ribosome subunit from the endoplasmic reticulum membrane. The UREL complex is also involved in reticulophagy in response to endoplasmic reticulum stress by promoting ufmylation of proteins such as CYB5R3 and RPN1, thereby promoting lysosomal degradation of ufmylated proteins. Ufmylation-dependent reticulophagy inhibits the unfolded protein response (UPR) by regulating ERN1/IRE1-alpha stability. Acts as a regulator of immunity by promoting differentiation of B-cells into plasma cells: acts by promoting expansion of the endoplasmic reticulum and regulating the unfolded protein response (UPR). May also be required for TRIP4 ufmylation. May play a role in NF-kappa-B-mediated transcription through regulation of the phosphorylation and the degradation of NFKBIA, the inhibitor of NF-kappa-B. Plays a role in cartilage development through SOX9, inhibiting the ubiquitin-mediated proteasomal degradation of this transcriptional regulator. Required for stabilization and ufmylation of ATG9A. This chain is DDRGK domain-containing protein 1, found in Bos taurus (Bovine).